Reading from the N-terminus, the 160-residue chain is Small ribosomal subunit protein uS7 (160 aa).

It belongs to the universal ribosomal protein uS7 family. Part of the 30S ribosomal subunit. Contacts proteins S9 and S11.

In terms of biological role, one of the primary rRNA binding proteins, it binds directly to 16S rRNA where it nucleates assembly of the head domain of the 30S subunit. Is located at the subunit interface close to the decoding center, probably blocks exit of the E-site tRNA. In Anaplasma marginale (strain Florida), this protein is Small ribosomal subunit protein uS7.